The following is a 513-amino-acid chain: Gluconokinase (513 aa).

Residues Lys-16, Thr-261, Gly-300, and 412–416 (GFARS) contribute to the ATP site.

This sequence belongs to the FGGY kinase family.

It catalyses the reaction D-gluconate + ATP = 6-phospho-D-gluconate + ADP + H(+). It participates in carbohydrate acid metabolism; D-gluconate degradation. Catabolite repression by gluconate. The sequence is that of Gluconokinase (gntK) from Bacillus licheniformis.